The sequence spans 79 residues: D-alanyl carrier protein (79 aa).

The 77-residue stretch at 1-77 (MDIKSEVIEI…KIIAGIVELQ (77 aa)) folds into the Carrier domain. Residue serine 35 is modified to O-(pantetheine 4'-phosphoryl)serine.

This sequence belongs to the DltC family. In terms of processing, 4'-phosphopantetheine is transferred from CoA to a specific serine of apo-DCP.

It localises to the cytoplasm. It functions in the pathway cell wall biogenesis; lipoteichoic acid biosynthesis. Carrier protein involved in the D-alanylation of lipoteichoic acid (LTA). The loading of thioester-linked D-alanine onto DltC is catalyzed by D-alanine--D-alanyl carrier protein ligase DltA. The DltC-carried D-alanyl group is further transferred to cell membrane phosphatidylglycerol (PG) by forming an ester bond, probably catalyzed by DltD. D-alanylation of LTA plays an important role in modulating the properties of the cell wall in Gram-positive bacteria, influencing the net charge of the cell wall. The sequence is that of D-alanyl carrier protein from Streptococcus pneumoniae serotype 2 (strain D39 / NCTC 7466).